The chain runs to 507 residues: MRTKYFSLLVFIIVLASNEVIAKKHSSTPKLRRSDFPKDFIFGAATSAYQVEGAAHEDGRGPSIWDTFSEKYPEKIKDGTNGSIASDSYHLYKEDVGLLHQIGFGAYRFSISWSRILPRGNLKGGINQAGIDYYNNLINELLSKGIKPFATIFHWDTPQSLEDAYGGFFGAEIVNDFRDYADICFKNFGDRVKHWMTLNEPLTVVQQGYVAGVMAPGRCSKFTNPNCTAGNGATEPYIVGHNLILAHGEAVKVYREKYKASQKGQVGIALNAGWNLPYTESAEDRLAAARAMAFTFDYFMEPLVTGKYPVDMVNNVKDGRLPTFTAKQSKMLKGSYDFIGINYYSSSYAKDVPCSSENVTLFSDPCASVTGEREGVPIGPKAASDWLLIYPKGIRDLLLYAKYKFKDPVMYITENGRDEASTGKIDLKDSERIDYYAQHLKMVQDAISIGANVKGFFAWSLLDNFEWATGYSVRFGLVYVDFNDGRKRYPKKSAKWFRKLLSEKKRN.

Positions 1–22 (MRTKYFSLLVFIIVLASNEVIA) are cleaved as a signal peptide. Residue glutamine 50 coordinates a beta-D-glucoside. Asparagine 81 carries N-linked (GlcNAc...) asparagine glycosylation. A beta-D-glucoside-binding positions include histidine 154 and 199–200 (NE). Catalysis depends on glutamate 200, which acts as the Proton donor. A disulfide bond links cysteine 219 and cysteine 227. Residue asparagine 226 is glycosylated (N-linked (GlcNAc...) asparagine). Tyrosine 344 lines the a beta-D-glucoside pocket. N-linked (GlcNAc...) asparagine glycosylation occurs at asparagine 358. Residues glutamate 414, tryptophan 459, 466–467 (EW), and phenylalanine 475 each bind a beta-D-glucoside. Catalysis depends on glutamate 414, which acts as the Nucleophile.

Belongs to the glycosyl hydrolase 1 family.

It carries out the reaction Hydrolysis of terminal, non-reducing beta-D-glucosyl residues with release of beta-D-glucose.. In Arabidopsis thaliana (Mouse-ear cress), this protein is Beta-glucosidase 13.